Here is a 101-residue protein sequence, read N- to C-terminus: Phosphoribosyl-AMP cyclohydrolase (101 aa).

A Mg(2+)-binding site is contributed by aspartate 71. Cysteine 72 serves as a coordination point for Zn(2+). Mg(2+)-binding residues include aspartate 73 and aspartate 75. Zn(2+) is bound by residues cysteine 88 and cysteine 95.

Belongs to the PRA-CH family. As to quaternary structure, homodimer. It depends on Mg(2+) as a cofactor. Requires Zn(2+) as cofactor.

It localises to the cytoplasm. It catalyses the reaction 1-(5-phospho-beta-D-ribosyl)-5'-AMP + H2O = 1-(5-phospho-beta-D-ribosyl)-5-[(5-phospho-beta-D-ribosylamino)methylideneamino]imidazole-4-carboxamide. The protein operates within amino-acid biosynthesis; L-histidine biosynthesis; L-histidine from 5-phospho-alpha-D-ribose 1-diphosphate: step 3/9. Catalyzes the hydrolysis of the adenine ring of phosphoribosyl-AMP. This Bacillus cereus (strain Q1) protein is Phosphoribosyl-AMP cyclohydrolase.